A 583-amino-acid chain; its full sequence is Protein FMP25, mitochondrial (583 aa).

Residues 1-25 constitute a mitochondrion transit peptide; that stretch reads MSFRLFTRTSQRLPRLNWVSPIRRY. The chain crosses the membrane as a helical span at residues 83–105; it reads AVGQGILILVVVGGLGTAYLRWP. 4 RCC1 repeats span residues 332 to 389, 390 to 452, 459 to 510, and 512 to 569; these read KGQF…AIDK, TGEI…VTIR, DHHY…TETE, and ENEV…KEQR.

It is found in the mitochondrion membrane. This is Protein FMP25, mitochondrial (FMP25) from Saccharomyces cerevisiae (strain ATCC 204508 / S288c) (Baker's yeast).